Here is a 573-residue protein sequence, read N- to C-terminus: Probable D-xylulose kinase A (573 aa).

Residues His-97, Arg-168, Asp-284, and Asn-285 each coordinate substrate. ATP is bound by residues Trp-366, 471–472 (GG), and Asn-475.

This sequence belongs to the FGGY kinase family.

It is found in the cytoplasm. It catalyses the reaction D-xylulose + ATP = D-xylulose 5-phosphate + ADP + H(+). In terms of biological role, highly specific D-xylulose kinase which participates in the catabolism of xylose. Xylose is a major component of hemicelluloses such as xylan. Most fungi utilize D-xylose via three enzymatic reactions, xylose reductase (XR), xylitol dehydrogenase (XDH), and xylulokinase, to form xylulose 5-phosphate, which enters pentose phosphate pathway. In Aspergillus clavatus (strain ATCC 1007 / CBS 513.65 / DSM 816 / NCTC 3887 / NRRL 1 / QM 1276 / 107), this protein is Probable D-xylulose kinase A (xkiA).